A 218-amino-acid polypeptide reads, in one-letter code: Guanylate kinase (218 aa).

The Guanylate kinase-like domain occupies G10–T190. Position 17-24 (S17–S24) interacts with ATP.

It belongs to the guanylate kinase family.

It localises to the cytoplasm. The catalysed reaction is GMP + ATP = GDP + ADP. Its function is as follows. Essential for recycling GMP and indirectly, cGMP. In Jannaschia sp. (strain CCS1), this protein is Guanylate kinase.